The following is a 113-amino-acid chain: MGRGVSVGGGQSSLGYLFGSGEAPKPAINNAPAPSSETLPISADPSPKHVAAQTVNVTKQIPAGINKSSTNNYIRADGQNTGNFLTDRPSTKVHAAPGGGSSLDYLFGGGGSN.

Residues 1–12 are compositionally biased toward gly residues; that stretch reads MGRGVSVGGGQS. Positions 1–50 are disordered; sequence MGRGVSVGGGQSSLGYLFGSGEAPKPAINNAPAPSSETLPISADPSPKHV. Residues 23–34 are compositionally biased toward low complexity; it reads APKPAINNAPAP. A Phosphoserine modification is found at Ser-69. Residues 79–113 are disordered; that stretch reads QNTGNFLTDRPSTKVHAAPGGGSSLDYLFGGGGSN. The segment covering 97–113 has biased composition (gly residues); the sequence is PGGGSSLDYLFGGGGSN.

The protein belongs to the SPIRAL1 family. Detected in pollen of mature flowers.

Acts redundantly with SPR1 in maintaining the cortical microtubules organization essential for anisotropic cell growth. The polypeptide is Protein SPIRAL1-like 1 (SP1L1) (Arabidopsis thaliana (Mouse-ear cress)).